Consider the following 117-residue polypeptide: Gamma-aminobutyric acid receptor-associated protein-like 3 (117 aa).

An interaction with beta-tubulin region spans residues Met-1–Arg-22. Positions Ala-36–Ile-68 are interaction with GABRG2. The Phosphatidylethanolamine amidated glycine moiety is linked to residue Gly-116. Lys-117 is a propeptide (removed in mature form).

This sequence belongs to the ATG8 family. Interacts with GABRG2 and beta-tubulin. In terms of processing, the precursor molecule is cleaved by ATG4B to form the cytosolic form, GABARAPL3-I. This is activated by APG7L/ATG7, transferred to ATG3 and conjugated to phospholipid to form the membrane-bound form, GABARAPL3-II. ATG4B also mediates the delipidation required for GABARAPL1 recycling when autophagosomes fuse with lysosomes. In terms of tissue distribution, ubiquitous. Expressed at very high levels in the brain, heart, peripheral blood leukocytes, liver, kidney, placenta and skeletal muscle. Expressed at very low levels in thymus and small intestine.

Its subcellular location is the cytoplasm. The protein localises to the cytoskeleton. It localises to the cytoplasmic vesicle. The protein resides in the autophagosome membrane. In terms of biological role, ubiquitin-like modifier involved in autophagosome formation. Whereas LC3s are involved in elongation of the phagophore membrane, the GABARAP/GATE-16 subfamily is essential for a later stage in autophagosome maturation. The sequence is that of Gamma-aminobutyric acid receptor-associated protein-like 3 (GABARAPL3) from Homo sapiens (Human).